The sequence spans 428 residues: Enolase (428 aa).

Glutamine 163 contacts (2R)-2-phosphoglycerate. Residue glutamate 205 is the Proton donor of the active site. Residues aspartate 242, glutamate 283, and aspartate 310 each coordinate Mg(2+). Residues lysine 335, arginine 364, serine 365, and lysine 386 each contribute to the (2R)-2-phosphoglycerate site. Residue lysine 335 is the Proton acceptor of the active site.

Belongs to the enolase family. Mg(2+) serves as cofactor.

It is found in the cytoplasm. Its subcellular location is the secreted. The protein localises to the cell surface. It catalyses the reaction (2R)-2-phosphoglycerate = phosphoenolpyruvate + H2O. It participates in carbohydrate degradation; glycolysis; pyruvate from D-glyceraldehyde 3-phosphate: step 4/5. Functionally, catalyzes the reversible conversion of 2-phosphoglycerate (2-PG) into phosphoenolpyruvate (PEP). It is essential for the degradation of carbohydrates via glycolysis. This is Enolase from Streptomyces avermitilis (strain ATCC 31267 / DSM 46492 / JCM 5070 / NBRC 14893 / NCIMB 12804 / NRRL 8165 / MA-4680).